The sequence spans 289 residues: Phosphatidylserine decarboxylase proenzyme (289 aa).

Residues Asp-92, His-149, and Ser-254 each act as charge relay system; for autoendoproteolytic cleavage activity in the active site. Ser-254 serves as the catalytic Schiff-base intermediate with substrate; via pyruvic acid; for decarboxylase activity. Ser-254 carries the pyruvic acid (Ser); by autocatalysis modification.

It belongs to the phosphatidylserine decarboxylase family. PSD-B subfamily. Prokaryotic type I sub-subfamily. As to quaternary structure, heterodimer of a large membrane-associated beta subunit and a small pyruvoyl-containing alpha subunit. The cofactor is pyruvate. Post-translationally, is synthesized initially as an inactive proenzyme. Formation of the active enzyme involves a self-maturation process in which the active site pyruvoyl group is generated from an internal serine residue via an autocatalytic post-translational modification. Two non-identical subunits are generated from the proenzyme in this reaction, and the pyruvate is formed at the N-terminus of the alpha chain, which is derived from the carboxyl end of the proenzyme. The autoendoproteolytic cleavage occurs by a canonical serine protease mechanism, in which the side chain hydroxyl group of the serine supplies its oxygen atom to form the C-terminus of the beta chain, while the remainder of the serine residue undergoes an oxidative deamination to produce ammonia and the pyruvoyl prosthetic group on the alpha chain. During this reaction, the Ser that is part of the protease active site of the proenzyme becomes the pyruvoyl prosthetic group, which constitutes an essential element of the active site of the mature decarboxylase.

It localises to the cell membrane. The catalysed reaction is a 1,2-diacyl-sn-glycero-3-phospho-L-serine + H(+) = a 1,2-diacyl-sn-glycero-3-phosphoethanolamine + CO2. Its pathway is phospholipid metabolism; phosphatidylethanolamine biosynthesis; phosphatidylethanolamine from CDP-diacylglycerol: step 2/2. Catalyzes the formation of phosphatidylethanolamine (PtdEtn) from phosphatidylserine (PtdSer). This Pseudomonas aeruginosa (strain ATCC 15692 / DSM 22644 / CIP 104116 / JCM 14847 / LMG 12228 / 1C / PRS 101 / PAO1) protein is Phosphatidylserine decarboxylase proenzyme.